Reading from the N-terminus, the 299-residue chain is Nicotinate-nucleotide pyrophosphorylase [carboxylating] (299 aa).

An important for hexamer formation region spans residues 8-12 (FLLPP). Residues arginine 102, 138–139 (RK), 160–161 (HR), lysine 171, glutamate 201, aspartate 222, 248–250 (SGG), and glycine 270 contribute to the quinolinate site.

The protein belongs to the NadC/ModD family. In terms of assembly, hexamer formed by 3 homodimers.

The enzyme catalyses nicotinate beta-D-ribonucleotide + CO2 + diphosphate = quinolinate + 5-phospho-alpha-D-ribose 1-diphosphate + 2 H(+). The protein operates within cofactor biosynthesis; NAD(+) biosynthesis; nicotinate D-ribonucleotide from quinolinate: step 1/1. Involved in the catabolism of quinolinic acid (QA). This Rattus norvegicus (Rat) protein is Nicotinate-nucleotide pyrophosphorylase [carboxylating] (Qprt).